A 158-amino-acid polypeptide reads, in one-letter code: Lipoprotein signal peptidase (158 aa).

Transmembrane regions (helical) follow at residues 7 to 27 (LFWI…YWVV), 38 to 58 (ILPG…FSLF), 67 to 87 (WLSL…PVLE), and 95 to 115 (GLIL…GYVV). Catalysis depends on residues D116 and D132. A helical transmembrane segment spans residues 125 to 145 (FAVFNMADSFISIGIVCLLLA).

The protein belongs to the peptidase A8 family.

Its subcellular location is the cell inner membrane. The catalysed reaction is Release of signal peptides from bacterial membrane prolipoproteins. Hydrolyzes -Xaa-Yaa-Zaa-|-(S,diacylglyceryl)Cys-, in which Xaa is hydrophobic (preferably Leu), and Yaa (Ala or Ser) and Zaa (Gly or Ala) have small, neutral side chains.. It functions in the pathway protein modification; lipoprotein biosynthesis (signal peptide cleavage). In terms of biological role, this protein specifically catalyzes the removal of signal peptides from prolipoproteins. The polypeptide is Lipoprotein signal peptidase (Trichormus variabilis (strain ATCC 29413 / PCC 7937) (Anabaena variabilis)).